A 548-amino-acid polypeptide reads, in one-letter code: Tyrosine-protein phosphatase non-receptor type 61F (548 aa).

Topologically, residues 1-525 (MSEQKTSGSG…KQLAAKKRRS (525 aa)) are cytoplasmic. A Tyrosine-protein phosphatase domain is found at 33–296 (FYKEICETCD…DFSYQAIIEG (264 aa)). Positions 46 to 65 (KEKQFSTSESERHTNRGLNR) are disordered. Position 83 is a phosphoserine (Ser83). A Phosphotyrosine modification is found at Tyr86. Substrate-binding positions include Asp203, 237–243 (CSAGIGR), and Gln281. The active-site Phosphocysteine intermediate is the Cys237. Short sequence motifs (PXXP motif (SH3-binding)) lie at residues 327-330 (PPLP), 339-342 (PLAP), and 394-397 (PPLP). The tract at residues 386–517 (EVADSRPLPP…RKQRENEDKQ (132 aa)) is disordered. Over residues 404 to 428 (SDSDEDYLLDDDDEDDTDEDEEYET) the composition is skewed to acidic residues. 2 short sequence motifs (PXXP motif (SH3-binding)) span residues 459–462 (PAVP) and 480–483 (PASP). Over residues 502–517 (KVNDMKRKQRENEDKQ) the composition is skewed to basic and acidic residues. Residues 526–545 (LLTYIAAGVVVGVICAYAYT) traverse the membrane as a helical segment. At 546–548 (KLG) the chain is on the extracellular side.

The protein belongs to the protein-tyrosine phosphatase family. Non-receptor class 1 subfamily. As to quaternary structure, interacts (via C-terminus) with dock/dreadlocks; this interaction is independent of insulin stimulation and is required for dephosphorylation of the insulin-like receptor InR.

It is found in the cytoplasm. The protein resides in the membrane. It localises to the endomembrane system. Its subcellular location is the nucleus. It carries out the reaction O-phospho-L-tyrosyl-[protein] + H2O = L-tyrosyl-[protein] + phosphate. Functionally, non-receptor protein tyrosine phosphatase. Required for maintaining dock/dreadlocks in its non-phosphorylated state. Negative regulator of InR/insulin-like receptor signaling through dephosphorylation of tyrosines when recruited by dock/dreadlocks. In Drosophila melanogaster (Fruit fly), this protein is Tyrosine-protein phosphatase non-receptor type 61F.